Reading from the N-terminus, the 1060-residue chain is Carbamoyl phosphate synthase large chain (1060 aa).

The interval 1-401 (MPKRQDIHKI…SLLKAVRSLE (401 aa)) is carboxyphosphate synthetic domain. Residues Arg129, Arg169, Gly175, Gly176, Arg208, Ile210, Glu215, Gly241, Val242, His243, Gln284, and Glu298 each coordinate ATP. Residues 133 to 327 (KNLMQKLHEP…IAKMAAKIAV (195 aa)) enclose the ATP-grasp 1 domain. Gln284, Glu298, and Asn300 together coordinate Mg(2+). Mn(2+)-binding residues include Gln284, Glu298, and Asn300. The segment at 402–546 (VGLIHPERPA…YSTYESSTES (145 aa)) is oligomerization domain. Residues 547–929 (VKSDKPSVLV…ALYKAFEAAG (383 aa)) form a carbamoyl phosphate synthetic domain region. An ATP-grasp 2 domain is found at 671 to 861 (DQVIKSLKLP…LAQVATLAIL (191 aa)). ATP is bound by residues Arg707, His746, Leu748, Glu752, Gly777, Ile778, His779, Ser780, Gln820, and Glu832. Gln820, Glu832, and Asn834 together coordinate Mg(2+). Residues Gln820, Glu832, and Asn834 each coordinate Mn(2+). Residues 930–1060 (MHLPQFGRAL…QAFSISPIKS (131 aa)) form the MGS-like domain. The allosteric domain stretch occupies residues 930–1060 (MHLPQFGRAL…QAFSISPIKS (131 aa)).

Belongs to the CarB family. Composed of two chains; the small (or glutamine) chain promotes the hydrolysis of glutamine to ammonia, which is used by the large (or ammonia) chain to synthesize carbamoyl phosphate. Tetramer of heterodimers (alpha,beta)4. Mg(2+) serves as cofactor. Mn(2+) is required as a cofactor.

It carries out the reaction hydrogencarbonate + L-glutamine + 2 ATP + H2O = carbamoyl phosphate + L-glutamate + 2 ADP + phosphate + 2 H(+). It catalyses the reaction hydrogencarbonate + NH4(+) + 2 ATP = carbamoyl phosphate + 2 ADP + phosphate + 2 H(+). Its pathway is amino-acid biosynthesis; L-arginine biosynthesis; carbamoyl phosphate from bicarbonate: step 1/1. The protein operates within pyrimidine metabolism; UMP biosynthesis via de novo pathway; (S)-dihydroorotate from bicarbonate: step 1/3. Its function is as follows. Large subunit of the glutamine-dependent carbamoyl phosphate synthetase (CPSase). CPSase catalyzes the formation of carbamoyl phosphate from the ammonia moiety of glutamine, carbonate, and phosphate donated by ATP, constituting the first step of 2 biosynthetic pathways, one leading to arginine and/or urea and the other to pyrimidine nucleotides. The large subunit (synthetase) binds the substrates ammonia (free or transferred from glutamine from the small subunit), hydrogencarbonate and ATP and carries out an ATP-coupled ligase reaction, activating hydrogencarbonate by forming carboxy phosphate which reacts with ammonia to form carbamoyl phosphate. The sequence is that of Carbamoyl phosphate synthase large chain from Lacticaseibacillus casei (strain BL23) (Lactobacillus casei).